The following is a 130-amino-acid chain: MSEPNQLTRDQMTEIVKNIVVSVDVNENAVVISAKRLLSYFLKNVEGLEKILKVDVDKDNSIVVYASVKPTNPNLKSIILKVAVKESAFNLSQFKHEIIKAGDDVNIKIYVQQNESRTLAKNSSEEEVDF.

This is an uncharacterized protein from Sulfolobus islandicus filamentous virus (isolate Iceland/Hveragerdi) (SIFV).